We begin with the raw amino-acid sequence, 564 residues long: Septation ring formation regulator EzrA (564 aa).

Over 1–4 (MVLY) the chain is Extracellular. The chain crosses the membrane as a helical span at residues 5-23 (IILAIIVIILIAVGVLFYL). Topologically, residues 24-564 (RSNKRQIIEK…KHIEEEVIKQ (541 aa)) are cytoplasmic. Coiled coils occupy residues 99-138 (SFNA…YKDN), 190-223 (DGNY…LIRE), 271-300 (LISR…LIEH), 350-435 (VRQF…RRLL), and 471-550 (VKQL…ESVE).

This sequence belongs to the EzrA family.

Its subcellular location is the cell membrane. Functionally, negative regulator of FtsZ ring formation; modulates the frequency and position of FtsZ ring formation. Inhibits FtsZ ring formation at polar sites. Interacts either with FtsZ or with one of its binding partners to promote depolymerization. This Staphylococcus aureus (strain NCTC 8325 / PS 47) protein is Septation ring formation regulator EzrA.